A 533-amino-acid chain; its full sequence is Beta-xylosidase (533 aa).

The active-site Proton acceptor is D14. E186 serves as the catalytic Proton donor.

Belongs to the glycosyl hydrolase 43 family. As to quaternary structure, homodimer.

It localises to the cell membrane. The catalysed reaction is Hydrolysis of (1-&gt;4)-beta-D-xylans, to remove successive D-xylose residues from the non-reducing termini.. The sequence is that of Beta-xylosidase (xynB) from Bacillus subtilis (strain 168).